The chain runs to 454 residues: Exopolyphosphatase PRUNE1 (454 aa).

Residue methionine 1 is modified to N-acetylmethionine. Residues aspartate 28, aspartate 30, aspartate 106, and aspartate 179 each contribute to the Mn(2+) site. The DHH motif motif lies at aspartate 106 to histidine 108. The interval serine 394–proline 421 is essential for homodimerization. A disordered region spans residues serine 397 to cysteine 420. Serine 400 carries the phosphoserine modification. Residue threonine 411 is modified to Phosphothreonine. Phosphoserine is present on serine 415.

Belongs to the PPase class C family. Prune subfamily. As to quaternary structure, homooligomer. Able to homodimerize via its C-terminal domain. Interacts with NME1. Interacts with GSK3; at focal adhesion complexes where paxillin and vinculin are colocalized. Interacts with alpha and beta tubulin. Requires Mn(2+) as cofactor.

The protein localises to the cytoplasm. The protein resides in the nucleus. Its subcellular location is the cell junction. It is found in the focal adhesion. It catalyses the reaction diphosphate + H2O = 2 phosphate + H(+). Activated by magnesium ions and inhibited by manganese ions. Inhibited by dipyridamole, moderately sensitive to IBMX and inhibited by vinpocetine. Phosphodiesterase (PDE) that has higher activity toward cAMP than cGMP, as substrate. Plays a role in cell proliferation, migration and differentiation, and acts as a negative regulator of NME1. Plays a role in the regulation of neurogenesis. Involved in the regulation of microtubule polymerization. The protein is Exopolyphosphatase PRUNE1 (Prune1) of Mus musculus (Mouse).